The sequence spans 336 residues: Fructose-1,6-bisphosphatase class 1 (336 aa).

Mg(2+) contacts are provided by Glu92, Asp115, Leu117, and Asp118. Residues Asp118–Ser121, Asn211, Tyr244, Tyr262–Tyr264, and Lys274 each bind substrate. Mg(2+) is bound at residue Glu280.

Belongs to the FBPase class 1 family. As to quaternary structure, homotetramer. The cofactor is Mg(2+).

It localises to the cytoplasm. The enzyme catalyses beta-D-fructose 1,6-bisphosphate + H2O = beta-D-fructose 6-phosphate + phosphate. Its pathway is carbohydrate biosynthesis; gluconeogenesis. The chain is Fructose-1,6-bisphosphatase class 1 from Vibrio cholerae serotype O1 (strain ATCC 39541 / Classical Ogawa 395 / O395).